The primary structure comprises 197 residues: Holliday junction branch migration complex subunit RuvA (197 aa).

Residues 1-64 (MIALLRGLVV…EDVLALYGFL (64 aa)) are domain I. A domain II region spans residues 65–143 (TQDEKALFEK…AATGEEPGAP (79 aa)). A flexible linker region spans residues 144-153 (AAEALSPIDQ). The domain III stretch occupies residues 153 to 197 (QDVLSALLNLGCARPQAEAAVRKAKAAGASLDFEPLFRRALELVR).

This sequence belongs to the RuvA family. Homotetramer. Forms an RuvA(8)-RuvB(12)-Holliday junction (HJ) complex. HJ DNA is sandwiched between 2 RuvA tetramers; dsDNA enters through RuvA and exits via RuvB. An RuvB hexamer assembles on each DNA strand where it exits the tetramer. Each RuvB hexamer is contacted by two RuvA subunits (via domain III) on 2 adjacent RuvB subunits; this complex drives branch migration. In the full resolvosome a probable DNA-RuvA(4)-RuvB(12)-RuvC(2) complex forms which resolves the HJ.

It is found in the cytoplasm. Its function is as follows. The RuvA-RuvB-RuvC complex processes Holliday junction (HJ) DNA during genetic recombination and DNA repair, while the RuvA-RuvB complex plays an important role in the rescue of blocked DNA replication forks via replication fork reversal (RFR). RuvA specifically binds to HJ cruciform DNA, conferring on it an open structure. The RuvB hexamer acts as an ATP-dependent pump, pulling dsDNA into and through the RuvAB complex. HJ branch migration allows RuvC to scan DNA until it finds its consensus sequence, where it cleaves and resolves the cruciform DNA. In Solibacter usitatus (strain Ellin6076), this protein is Holliday junction branch migration complex subunit RuvA.